The following is a 668-amino-acid chain: MPPPETSSAAAPSPPSPDPLPPWRDQLTLRGVAVAAVLGSLLCVVIHRLNLTVGVIPALNVASGLLAFFLATAWRGAAAVLGLGHHRGRPFTRQENTVIQTCAIACGSLAFSGCSSSYIFAMDRKTYELVGQDYPGNRMEDIRDPSLGWMIGFMFLIALIGPFSIVMLRKVMVIDYKLAFPGGTATALMINSLHGKTEADLAGRKVHCLVKYMSLSFGWSFFKWFFSGVGDSCGFDNFPSFGIEAFKNTFYFNFNPSYVGYGLISPHIVNCSVFLGSVISWGFLWPFIAKQAGDWYPDNLSNTDFRGLYGYKVFIAISVILGDGLYNLVKVFLIIAKEICNARSKEHDLPVQALLQDDDSSRQLLDEKRQTEIFLKDSIPTWLAVSGYIVLAAISTVAVPIIFPQLKWYLVLVCYFLAPAIAFCNSYGMGLTNLNLAPTYGKIALFVFASLVGSDGGVIAGLAACGVIMSIVCSTADLMQDFKSGYLTLSSPRSMFISQMIGVALGCIIAPLTLWLFWTAFDIGDPDGEYKAPFAIIFREMAIIGIEGFAALPRHCLEICCVFFLAALIINLMKDVVPNHVSRFIPIPMAMAVPFYIGAYFGVDMFIGTLILFAWQKIDRREADDYAVAVASGLICGDGVWSIPSAVLSILGVDPPICMSFRPSSASV.

Positions 1 to 11 (MPPPETSSAAA) are enriched in low complexity. The interval 1-22 (MPPPETSSAAAPSPPSPDPLPP) is disordered. Pro residues predominate over residues 12 to 22 (PSPPSPDPLPP). The next 14 membrane-spanning stretches (helical) occupy residues 27–47 (LTLRGVAVAAVLGSLLCVVIH), 51–71 (LTVGVIPALNVASGLLAFFLA), 102–122 (CAIACGSLAFSGCSSSYIFAM), 147–167 (LGWMIGFMFLIALIGPFSIVM), 209–229 (LVKYMSLSFGWSFFKWFFSGV), 268–288 (IVNCSVFLGSVISWGFLWPFI), 315–335 (IAISVILGDGLYNLVKVFLII), 383–403 (LAVSGYIVLAAISTVAVPIIF), 410–430 (LVLVCYFLAPAIAFCNSYGMG), 443–463 (IALFVFASLVGSDGGVIAGLA), 501–521 (IGVALGCIIAPLTLWLFWTAF), 557–577 (LEICCVFFLAALIINLMKDVV), 595–615 (FYIGAYFGVDMFIGTLILFAW), and 633–653 (GLICGDGVWSIPSAVLSILGV).

The protein belongs to the YSL (TC 2.A.67.2) family. As to expression, expressed in roots.

It localises to the membrane. In terms of biological role, may be involved in the transport of nicotianamine-chelated metals. The protein is Probable metal-nicotianamine transporter YSL5 (YSL5) of Oryza sativa subsp. japonica (Rice).